The primary structure comprises 371 residues: MEIGSSSTVAGGGQLSVPPGFRFHPTEEELLYYYLKKKVSYEPIDLDVIREVDLNKLEPWELKEKCRIGSGPQNEWYFFSHKDKKYPTGTRTNRATAAGFWKATGRDKSIHLNSSKKIGLRKTLVFYTGRAPHGQKTEWIMHEYRLDDSENEIQEDGWVVCRVFKKKNHFRGFHQEQEQDHHHHHQYISTNNDHDHHHHIDSNSNNHSPLILHPLDHHHHHHHIGRQIHMPLHEFANTLSHGSMHLPQLFSPDSAAAAAAAAASAQPFVSPINTTDIECSQNLLRLTSNNNYGGDWSFLDKLLTTGNMNQQQQQQVQNHQAKCFGDLSNNDNNDQADHLGNNNGGSSSSPVNQRFPFHYLGNDANLLKFPK.

The region spanning 17-166 (VPPGFRFHPT…GWVVCRVFKK (150 aa)) is the NAC domain. Residues 118–172 (IGLRKTLVFYTGRAPHGQKTEWIMHEYRLDDSENEIQEDGWVVCRVFKKKNHFRG) mediate DNA binding. Disordered regions lie at residues 176 to 213 (EQEQDHHHHHQYISTNNDHDHHHHIDSNSNNHSPLILH) and 316 to 355 (VQNHQAKCFGDLSNNDNNDQADHLGNNNGGSSSSPVNQRF). Basic and acidic residues predominate over residues 192 to 201 (NDHDHHHHID). Low complexity-rich tracts occupy residues 202-213 (SNSNNHSPLILH) and 340-349 (GNNNGGSSSS).

As to expression, accumulates in maturing root cap cells, in both COL and LRC cells.

The protein localises to the nucleus. Transcription regulator. Together with BRN1 and BRN2, regulates cellular maturation of root cap. Represses stem cell-like divisions in the root cap daughter cells, and thus promotes daughter cell fate. Inhibits expression of its positive regulator FEZ in a feedback loop for controlled switches in cell division plane. Promotes the expression of genes involved in secondary cell walls (SCW) biosynthesis. The protein is Protein SOMBRERO (SMB) of Arabidopsis thaliana (Mouse-ear cress).